A 322-amino-acid polypeptide reads, in one-letter code: MQTRNTFSWTWIREEITRSISVSLMIYIITWSSISNAYPIFAQQNYENPREATGRIVCANCHLANKPVDIEVPQAVLPDTVFEAVVKIPYDMQLKQVLANGKKGALNVGAVLILPEGFELAPPDRISPEMKEKIGNLSFQNYRPNKKNILVIGPVPGQKYSEITFPILAPDPATNKDVHFLKYPIYVGGNRGRGQIYPDGSKSNNTVYNATAGGIISKILRKEKGGYEITIADASNGRQVIDIIPRGLELLVSEGESIKLDQPLTSNPNVGGFGQGDAEIVLQDPLRVQGLLFFLGSVVLAQIFLVLKKKQFEKVQLSEMNF.

The signal sequence occupies residues 1-35 (MQTRNTFSWTWIREEITRSISVSLMIYIITWSSIS). Heme is bound by residues tyrosine 38, cysteine 58, cysteine 61, and histidine 62. The helical transmembrane segment at 288–308 (VQGLLFFLGSVVLAQIFLVLK) threads the bilayer.

It belongs to the cytochrome f family. In terms of assembly, the 4 large subunits of the cytochrome b6-f complex are cytochrome b6, subunit IV (17 kDa polypeptide, petD), cytochrome f and the Rieske protein, while the 4 small subunits are PetG, PetL, PetM and PetN. The complex functions as a dimer. The cofactor is heme.

It is found in the plastid. The protein localises to the chloroplast thylakoid membrane. Its function is as follows. Component of the cytochrome b6-f complex, which mediates electron transfer between photosystem II (PSII) and photosystem I (PSI), cyclic electron flow around PSI, and state transitions. This is Cytochrome f from Aethionema cordifolium (Lebanon stonecress).